The primary structure comprises 117 residues: Prefoldin subunit beta (117 aa).

This sequence belongs to the prefoldin subunit beta family. Heterohexamer of two alpha and four beta subunits.

It localises to the cytoplasm. In terms of biological role, molecular chaperone capable of stabilizing a range of proteins. Seems to fulfill an ATP-independent, HSP70-like function in archaeal de novo protein folding. In Pyrococcus horikoshii (strain ATCC 700860 / DSM 12428 / JCM 9974 / NBRC 100139 / OT-3), this protein is Prefoldin subunit beta (pfdB).